The primary structure comprises 446 residues: Histidine--tRNA ligase (446 aa).

It belongs to the class-II aminoacyl-tRNA synthetase family. As to quaternary structure, homodimer.

The protein resides in the cytoplasm. The enzyme catalyses tRNA(His) + L-histidine + ATP = L-histidyl-tRNA(His) + AMP + diphosphate + H(+). In Burkholderia cenocepacia (strain ATCC BAA-245 / DSM 16553 / LMG 16656 / NCTC 13227 / J2315 / CF5610) (Burkholderia cepacia (strain J2315)), this protein is Histidine--tRNA ligase.